The following is a 360-amino-acid chain: Putative mRNA-decapping protein (360 aa).

The segment at 11–28 adopts a CCHC-type zinc-finger fold; the sequence is HICSNCGRSGHEFRNCIE. Residues 163-347 enclose the Nudix hydrolase domain; sequence YKYDNILYHF…KKRILTRVYL (185 aa). Positions 242–264 match the Nudix box motif; the sequence is GRRDKRSEENMVCACREFEEETG. Glutamate 249 is a Mg(2+) binding site. Catalysis depends on glutamate 258, which acts as the Nucleophile. Glutamate 262 contributes to the Mg(2+) binding site.

It belongs to the Nudix hydrolase family. DIPP subfamily. Requires Mg(2+) as cofactor. The cofactor is Mn(2+).

It catalyses the reaction diphospho-myo-inositol polyphosphate + H2O = myo-inositol polyphosphate + phosphate.. Functionally, might function as a decapping enzyme required for the removal of the 5'-end m7GpppN cap tethered to viral and host mRNAs to allow their decay in cells. In addition to the mRNA cap, probably also efficiently hydrolyzes diphosphoinositol polyphosphates. This Acanthamoeba polyphaga (Amoeba) protein is Putative mRNA-decapping protein.